A 301-amino-acid polypeptide reads, in one-letter code: Tetrahydromethanopterin S-methyltransferase subunit E (301 aa).

The next 5 membrane-spanning stretches (helical) occupy residues 85–105, 130–150, 151–171, 232–252, and 258–278; these read VIFA…TYCI, HTPV…VVSY, IMVA…IWGI, PVTG…TAVF, and LTMG…LIIW.

Belongs to the MtrE family. In terms of assembly, the complex is composed of 8 subunits; MtrA, MtrB, MtrC, MtrD, MtrE, MtrF, MtrG and MtrH.

The protein localises to the cell membrane. The enzyme catalyses 5-methyl-5,6,7,8-tetrahydromethanopterin + coenzyme M + 2 Na(+)(in) = 5,6,7,8-tetrahydromethanopterin + methyl-coenzyme M + 2 Na(+)(out). Its function is as follows. Part of a complex that catalyzes the formation of methyl-coenzyme M and tetrahydromethanopterin from coenzyme M and methyl-tetrahydromethanopterin. This is an energy-conserving, sodium-ion translocating step. The sequence is that of Tetrahydromethanopterin S-methyltransferase subunit E from Methanococcoides burtonii (strain DSM 6242 / NBRC 107633 / OCM 468 / ACE-M).